A 1547-amino-acid polypeptide reads, in one-letter code: MADGSRLPESATSTTMETNTNEHAKVLSPDAETVPSSSMTATSSELSLDGRWGERDQGEPVSRRGAMEDFEEMRRELTQLSLRRTRSVGKDAHRLRSRASGRASQVHDEEKAIDEEDSTIDGDGDGYQGGFDLGEFLMGGHLERRTTTGEPAKKVGVLFKHLTVKGVETGASFVRTLPDAVVGTFGPDLYRIVCSFIPQLRFGKQPPVRELLHDFTGLVREGEMMLVLGRPGAGCSTFLKTIANDRGAFAGVEGEVRYGGLSAEEQLKHFRGEVNYNPEDDQHFPSLTVWQTLKFSLINKTKKHDKNSIPIIIDALLKMFGITHTKNTLVGNEYVRGVSGGERKRVSIAETLATKSSVVCWDNSTRGLDASTALDYAKSLRIMTDVSKRTTFVTLYQAGESIYELMDKVLVIDSGRMLYQGPANKAREYFVNLGFHCPEKSTTADFLTSICDPNARQFQPGREASTPKTPEELEAVFRNSETYKTICDEVASYEKKLQDTDQEDTRRFQKTVAQSKSRTVSKKSSYTVSFARQVLACVQREFWLLWGDKTSLYTKYFIIISNALIVSSLFYGESLDTSGAFSRGGALFFSILFLGWLQLTELMPAVTGRGIVARHKEYAFYRPSAVSIARVVMDFPAIFCMVVPFTIIMYFMTGLDVTASKFFIYFLFVYTTTFSITSLYRMFAALSPTIDDAVRFSGIALNILVIFVGYVIPKQGLIDGSIWFGWLFYVNPIAYSYEAVLTNEFSDRIMDCAPSQLVPQGPGVDPRYQGCALPGSELGRRGVSGSRYLEESFQFTRSHLWRNFGVVIAFTVLYLIVTVLAAEFLSFVGGGGGALVFKRSKRAKKLATQTTQGNDEEKVQDVGDKAALSRGEAMSASNGESFKRISSSDRIFTWSNVEYTVPYGNGTRKLLNGVNGYAKPGVMIALMGASGAGKTTLLNTLAQRQKMGVVTGDFLVDGRPLGADFQRGTGFCEQMDLHDNTSTIREALEFSALLRQDRNVSKQEKLDYVDQIIDLLELNDIQDAIIGSLNVEQKKRVTIGVELAAKPSLLLFLDEPTSGLDSQAAFSIVRFLKKLSLAGQAILCTIHQPSSMLIQQFDMILALNPGGNTFYFGPVGHDGGDVIKYFADRGVVCPPSKNVAEFILETAAKATTTKDGKKIDWNEEWRNSEQNQRVLDEIQQIREERSKIPVTETGSPYEFAASTMTQTLLLTKRIFRQYWRDPSYYYGKLFVSVIIGIFNGFTFWMLGNSIANMQDRMFSIFLIIMIPPVVLNSIVPKFYINRALWEAREYPSRIYGWFAFCTANIVCEIPMAIVSSLIYWLLWYYPVGFPTDSSTAGYVFLMSMLFFLFMSSWGQWICAFAPSFTVISNVLPFFFVMCNLFNGIVRPYRDYPVFWKYWMYYVNPVTWWLRGVISSIFPTVQIDCSPSETTHFNPPPGQTCANYAGNFITNIAKNGYLLNPDASADCQYCPYSNGAEYMATLNVHDGDKWRCFGIFLAFVIINWLLVYFFIYTVRVRGWSFGMGYLFGGMGLVIDKVKGVFKRKSEKA.

Disordered stretches follow at residues M1–A66 and T85–D123. A compositionally biased stretch (polar residues) spans S10 to N19. A compositionally biased stretch (low complexity) spans S36–S47. The span at R51–A66 shows a compositional bias: basic and acidic residues. A compositionally biased stretch (acidic residues) spans K111 to D123. The 243-residue stretch at I197–E439 folds into the ABC transporter 1 domain. Residues N299 and N363 are each glycosylated (N-linked (GlcNAc...) asparagine). Transmembrane regions (helical) follow at residues L552–G572, A586–V606, F635–L655, V657–T677, G698–I718, I722–T742, and F804–F824. The 239-residue stretch at F892–G1130 folds into the ABC transporter 2 domain. Residue N905 is glycosylated (N-linked (GlcNAc...) asparagine). Residue G928–T935 participates in ATP binding. Residues N980 and N999 are each glycosylated (N-linked (GlcNAc...) asparagine). The next 8 helical transmembrane spans lie at F1230–I1250, I1260–I1280, I1309–F1329, S1334–G1354, W1356–V1376, Y1397–F1417, C1491–Y1511, and F1520–F1540.

This sequence belongs to the ABC transporter superfamily. ABCG family. PDR (TC 3.A.1.205) subfamily.

Its subcellular location is the cell membrane. The catalysed reaction is voriconazole(in) + ATP + H2O = voriconazole(out) + ADP + phosphate + H(+). It catalyses the reaction fluconazole(in) + ATP + H2O = fluconazole(out) + ADP + phosphate + H(+). In terms of biological role, pleiotropic ABC efflux transporter involved in the basal level of azole susceptibility. Confers resistance to fluconazole and voriconazole. The polypeptide is ABC multidrug transporter atrF (Aspergillus fumigatus (strain ATCC MYA-4609 / CBS 101355 / FGSC A1100 / Af293) (Neosartorya fumigata)).